The primary structure comprises 278 residues: Pantothenate synthetase (278 aa).

Residue M27 to H34 coordinates ATP. H34 functions as the Proton donor in the catalytic mechanism. Residue Q58 participates in (R)-pantoate binding. Position 58 (Q58) interacts with beta-alanine. G147–D150 provides a ligand contact to ATP. Q153 provides a ligand contact to (R)-pantoate. Residue Y184–R187 participates in ATP binding.

Belongs to the pantothenate synthetase family. Homodimer.

Its subcellular location is the cytoplasm. The enzyme catalyses (R)-pantoate + beta-alanine + ATP = (R)-pantothenate + AMP + diphosphate + H(+). It participates in cofactor biosynthesis; (R)-pantothenate biosynthesis; (R)-pantothenate from (R)-pantoate and beta-alanine: step 1/1. In terms of biological role, catalyzes the condensation of pantoate with beta-alanine in an ATP-dependent reaction via a pantoyl-adenylate intermediate. This Acidithiobacillus ferrooxidans (strain ATCC 23270 / DSM 14882 / CIP 104768 / NCIMB 8455) (Ferrobacillus ferrooxidans (strain ATCC 23270)) protein is Pantothenate synthetase.